We begin with the raw amino-acid sequence, 690 residues long: Peroxidase (690 aa).

The first 20 residues, 1 to 20 (MIRARDLLLLALLGFISSAL), serve as a signal peptide directing secretion. C100 and C112 form a disulfide bridge. The active-site Proton acceptor is H185. N-linked (GlcNAc...) asparagine glycosylation occurs at N310. An intrachain disulfide couples C315 to C324. H437 contributes to the heme b binding site. Cystine bridges form between C536–C592 and C636–C662.

It belongs to the peroxidase family. XPO subfamily. It depends on heme b as a cofactor.

The protein resides in the secreted. It catalyses the reaction 2 a phenolic donor + H2O2 = 2 a phenolic radical donor + 2 H2O. Functionally, involved in the chorion hardening process, through protein cross-linking mediated by the formation of di- and tri-tyrosine bonds. This Drosophila melanogaster (Fruit fly) protein is Peroxidase (Pxd).